We begin with the raw amino-acid sequence, 82 residues long: UPF0180 protein BALH_1248 (82 aa).

It belongs to the UPF0180 family.

The polypeptide is UPF0180 protein BALH_1248 (Bacillus thuringiensis (strain Al Hakam)).